The sequence spans 394 residues: MARFIILFLLLAPVYSRLCLRNHPDTTWIGDSRSDQSRVNQQSLDLVTNFKGILQAKNGNGLMKQMSGRFPSDWYQPTTKYRILYIGTNDCTEGPNDVIIPTSMTLDNVARDLYLGACRGDVRVTPTFVGAAELGLIGRTDALTEFSVKVLTFNNPTIVVVGLNGMSGIYKVCIAASSGNVGGVNLVNGCGYFSAPLRFDNFKGQIYVSDTFEVRGTKNKCVILRSSSNAPLCTHIKRNIELDEYVDTPNTGGVYPSDGFDSLHGSASIRTFLTEALTCPGVDWDRIDAASCEYDSCPKLVKEFDQTGLGNTDTQIMRELEAQKEMIGKLGRNITDVNNRVDAIPPQLSNIFISMGVAGFGIALFLAGWKACVWIAAFMYKSRGRNPPANLSVA.

A signal peptide spans Met1 to Ser16. Residues Arg17–Gln347 lie on the Extracellular side of the membrane. Ser32 is a catalytic residue. A Cell attachment site motif is present at residues Arg119–Asp121. Active-site residues include Asp261 and His264. Residue Asn333 is glycosylated (N-linked (GlcNAc...) asparagine; by host). The highly polymorphic region stretch occupies residues Thr335 to Ala358. The chain crosses the membrane as a helical span at residues Leu348–Gly368. Topologically, residues Trp369–Ala394 are cytoplasmic.

The protein resides in the host membrane. Its subcellular location is the virion membrane. The enzyme catalyses N-acetyl-9-O-acetylneuraminate + H2O = N-acetylneuraminate + acetate + H(+). It catalyses the reaction N-acetyl-4-O-acetylneuraminate + H2O = N-acetylneuraminate + acetate + H(+). Functionally, performs attachment to host receptor thereby inducing virus particle entry into target cell. Binds specifically to 5-N-acetyl-4-O-acetyl neuraminic acid on host cells, which plays a major role in cell tropism of the virus. ALso mediates de-O-acetylation of N-acetyl-4-O-acetylneuraminic acid. This receptor-destroying activity is important for virus release as it probably helps preventing self-aggregation and ensures the efficient spread of the progeny virus from cell to cell. The highly polymorphic region (HPR) modulates the virulence in host. Catalyzes the removal of terminal sialic acid residues from viral and cellular glycoconjugates. The protein is Hemagglutinin-esterase of Gadus morhua (Atlantic cod).